A 291-amino-acid chain; its full sequence is Probable prolyl 4-hydroxylase 12 (291 aa).

Over 1 to 156 (MACLSRIFLI…GEEPSSVLHE (156 aa)) the chain is Cytoplasmic. A Fe2OG dioxygenase domain is found at 125 to 239 (NGGSIKVRSY…LLVATKLIYA (115 aa)). Fe cation-binding residues include lysine 142 and aspartate 144. A helical; Signal-anchor for type II membrane protein membrane pass occupies residues 157–173 (SLLATVVLYLSNTTQGG). At 174–291 (ELLFPNSEMK…GTCRKSCNAC (118 aa)) the chain is on the lumenal side. N-linked (GlcNAc...) asparagine glycosylation occurs at asparagine 211. Residue histidine 220 coordinates Fe cation. One can recognise a ShKT domain in the interval 251-291 (CSDEDENCGRWAKLGECKKNPVYMIGSPDYYGTCRKSCNAC). Intrachain disulfides connect cysteine 251-cysteine 291, cysteine 258-cysteine 284, and cysteine 267-cysteine 288.

The protein belongs to the P4HA family. Requires Fe(2+) as cofactor. The cofactor is L-ascorbate.

The protein localises to the endoplasmic reticulum membrane. The enzyme catalyses L-prolyl-[collagen] + 2-oxoglutarate + O2 = trans-4-hydroxy-L-prolyl-[collagen] + succinate + CO2. In terms of biological role, catalyzes the post-translational formation of 4-hydroxyproline in -Xaa-Pro-Gly- sequences in proline-rich peptide sequences of plant glycoproteins and other proteins. Hydroxyprolines are important constituent of many plant cell wall glycoproteins such as extensins, hydroxyproline-rich glycoproteins, lectins and arabinogalactan proteins. The protein is Probable prolyl 4-hydroxylase 12 of Arabidopsis thaliana (Mouse-ear cress).